Consider the following 927-residue polypeptide: LPS-assembly protein LptD (927 aa).

The N-terminal stretch at 1-22 is a signal peptide; it reads MALKSPAFRKKFPLLVTGSLLA. Residues 60–100 form a disordered region; sequence LPPRPVHSTASVSSNGTVTSESSSSGEQVAGPQLVTEAKGK. Residues 70–86 show a composition bias toward low complexity; the sequence is SVSSNGTVTSESSSSGE.

This sequence belongs to the LptD family. In terms of assembly, component of the lipopolysaccharide transport and assembly complex. Interacts with LptE and LptA.

The protein resides in the cell outer membrane. Functionally, together with LptE, is involved in the assembly of lipopolysaccharide (LPS) at the surface of the outer membrane. This chain is LPS-assembly protein LptD, found in Pseudomonas syringae pv. tomato (strain ATCC BAA-871 / DC3000).